The following is a 264-amino-acid chain: Acyl-[acyl-carrier-protein]--UDP-N-acetylglucosamine O-acyltransferase (264 aa).

The protein belongs to the transferase hexapeptide repeat family. LpxA subfamily. As to quaternary structure, homotrimer.

The protein localises to the cytoplasm. It carries out the reaction a (3R)-hydroxyacyl-[ACP] + UDP-N-acetyl-alpha-D-glucosamine = a UDP-3-O-[(3R)-3-hydroxyacyl]-N-acetyl-alpha-D-glucosamine + holo-[ACP]. Its pathway is glycolipid biosynthesis; lipid IV(A) biosynthesis; lipid IV(A) from (3R)-3-hydroxytetradecanoyl-[acyl-carrier-protein] and UDP-N-acetyl-alpha-D-glucosamine: step 1/6. Involved in the biosynthesis of lipid A, a phosphorylated glycolipid that anchors the lipopolysaccharide to the outer membrane of the cell. The sequence is that of Acyl-[acyl-carrier-protein]--UDP-N-acetylglucosamine O-acyltransferase from Rickettsia prowazekii (strain Madrid E).